The chain runs to 121 residues: 18 kDa learning-associated protein of slug (121 aa).

Disordered stretches follow at residues 44-67 (TMKT…GSME) and 95-121 (AVKK…AIKW). A compositionally biased stretch (polar residues) spans 45-64 (MKTTEPIQENKTSEGTSTDG).

The protein belongs to the learning-associated protein family. As to expression, expressed predominantly in cerebral ganglia (at protein level). The mRNA is highly expressed in cerebral ganglia, and is detected at lower levels in visceral-pedal ganglia, head, and body, but is not detected in the tail.

The protein resides in the cytoplasm. It is found in the secreted. Its function is as follows. May be involved in modulating long-term memory formation and retention, at least with respect to odor-taste associative learning. This Lehmannia marginata (Tree slug) protein is 18 kDa learning-associated protein of slug.